The primary structure comprises 235 residues: Uridylate kinase (235 aa).

Residue 9–12 (KLSG) coordinates ATP. Position 51 (G51) interacts with UMP. Residues G52 and R56 each coordinate ATP. Residues D71 and 132-139 (TGNPYFTT) contribute to the UMP site. ATP-binding residues include T159, Y165, and D168.

It belongs to the UMP kinase family. Homohexamer.

The protein localises to the cytoplasm. The catalysed reaction is UMP + ATP = UDP + ADP. It functions in the pathway pyrimidine metabolism; CTP biosynthesis via de novo pathway; UDP from UMP (UMPK route): step 1/1. With respect to regulation, inhibited by UTP. In terms of biological role, catalyzes the reversible phosphorylation of UMP to UDP. The sequence is that of Uridylate kinase from Cytophaga hutchinsonii (strain ATCC 33406 / DSM 1761 / CIP 103989 / NBRC 15051 / NCIMB 9469 / D465).